Reading from the N-terminus, the 105-residue chain is Insulin (105 aa).

The signal sequence occupies residues 1 to 22 (MAFWLQAASLLVLLALSPGVDA). Disulfide bonds link Cys29–Cys91, Cys41–Cys104, and Cys90–Cys95. The propeptide at 53–82 (DVDPLIGFLSPKSAKENEEYPFKDQTEMMV) is c peptide.

This sequence belongs to the insulin family. As to quaternary structure, heterodimer of a B chain and an A chain linked by two disulfide bonds.

Its subcellular location is the secreted. Insulin decreases blood glucose concentration. It increases cell permeability to monosaccharides, amino acids and fatty acids. It accelerates glycolysis, the pentose phosphate cycle, and glycogen synthesis in liver. In Oncorhynchus keta (Chum salmon), this protein is Insulin (ins).